A 48-amino-acid polypeptide reads, in one-letter code: Sperm protamine P1 (48 aa).

The protein belongs to the protamine P1 family. Cross-linked by interchain disulfide bonds around the DNA-helix. As to expression, testis.

The protein localises to the nucleus. It is found in the chromosome. Its function is as follows. Protamines substitute for histones in the chromatin of sperm during the haploid phase of spermatogenesis. They compact sperm DNA into a highly condensed, stable and inactive complex. The sequence is that of Sperm protamine P1 (PRM1) from Cavia porcellus (Guinea pig).